The sequence spans 1798 residues: MDSTFRRVVFFSNEFPSDDLKELFRRLDQHSKDRRFRLLSIFLEESTAILKDEVSKLPRPLKELVPPFGSVLGLVDVDFRQGPLGAAMESSMLTILELGLFIGHYESEDTEWDLVPGESVLAGLSIGILAAAAVALSSGLSDVAKAGAEAVRVSFRLGVYVADISAKLEAPQSDGTLSSWAHVVTEMTEASVQDELKQFNTDTHSPELTKVFISAADKTSVSVSGPPSRIKAAFQHSPVLRYSKSLPLPVYDGLCHASHLYTQSDIDSIINSAESVILPDRSVRLALLSSKTGKPFIAKTASELFLEIGTELLTGTIYLDNVTAGIVRHLQPQSKEMSSWQIDSFRTSLVLRSIHSAVEAKISGEQRQLTRRDLVNWVNKDFGPRRPRSHASSKLAIVGMACRLPGGANDLDLFWKLLEEGRDTLTTVPPDRFDLNTHYDPTGKTENTTQTPYGNFIDRPGFFDAGFFNMSPREAEQTDPMQRLALVTAYEALEMAGVVPGRTPSTHPSRIGTFYGQASDDWRELNASQNISTYAVPGGERAFGNGRINYFFKFSGPSFNLDTACSSGLAAVQAACSALWAGEVDTAIAGGLNVITDPDNYCGLGNAHFLSKTGQCKVWDKDADGYCRADGIGSVVIKRLEDAEADNDNILAVVLGACTNHSAEAISITHPHAGAQKANYRQVLNQAGVNPIDVSYIELHGTGTQAGDAVESESVSDIFAPVTPRRRPDQRLYLGAVKSNIGHGEAAAGIASLLKALLVYQKNLIPMHIGIKSEINPTIPKDLERRNVGLAMQNTPWPRPAGKKRLAVVNSFGAHGGNTTLLLEDAPERVKIQGTEDRITHSVLLSAKSKKSLQANMESLLSYLDQYPETSLADLAYTTSSRRMHHNMRFGTSVSCISGLQKVLRSQLDNPNFASEVRPVPNEVPSVILAFTGQGAYYHGMGRELFAEFPYFRAQVQQLDRLAQRLGFPSVVPVIENSIEDTPSSPILTQLSVVILEIALARFWSLLGVSISAVIGHSLGEYAALAVAGVISATDAIYLVGRRAQLIEERCAQGSHSMLSVRAPEDAIQKMLAAEPETASIAYEVSCCNTNQDTVIGGLNGEINDIRRALEAKSIKCTILDVPYAFHTAQMNPILDDLEALAKAVPFKAPSIPVISPLLATVIYDVKSLNADYLRRATRETVDFAAAIEAAQDMGLVDSKTIWIDVGPHPICAGLVRSMIPSASAMSSCRRNEDSISTISKSLVALYLAGINPCWAEFFKPREGEYSLLHLPKYRWNEIDYWIPYIGTWTLDKAHLKHGTKPTTPFSVSMSRPSALRTSLVHQITAETVEATTAMLHTISDMQHPDFLEAIHGHTMNKCGVATSSIWSDMAFTVGEYLYRRLVPNTKDVHMNLTDVEVLHAQVASKTKGSVQPLVLRAHLNLSTNSMSLSWFNADGETGECAAESFASAMIRFEDPVAWRKEWARLAHLVRGRIEVLEQRASEGKASRLSKPLAYALFKNVVDYADRYRGMDSVVLDELEAMAEVTLVPERYGTWHTPPHWIDSVSHLAGLVMNGSDASNTRDYFFVTPGCDSFRLLKKLEPGARYRSYVRMFPLPEDPNMHGGDVYILQGEEIVGMVGMIRFRRVPRLLMDRFFSPPTTTSVPGPVPPLAGVTMKYHDIAQTAPVRPTPTPPIVLPNPVVSSTMASKAPEPAPLLATSSESSTPKESPIVTPAESERADPVDNNMISQCLRLMARETGLEVEALTADASFVQLGVDSLMSLVLSEKFRTELGVEIKSSLFLECPTIGEMTAWIEEYC.

Positions 25–256 are N-terminal acylcarrier protein transacylase domain (SAT); it reads RRLDQHSKDR…PLPVYDGLCH (232 aa). Residues 392-825 form the Ketosynthase family 3 (KS3) domain; sequence SSKLAIVGMA…GGNTTLLLED (434 aa). The disordered stretch occupies residues 436–455; that stretch reads NTHYDPTGKTENTTQTPYGN. The span at 444 to 453 shows a compositional bias: polar residues; the sequence is KTENTTQTPY. Residues Cys-565, His-700, and His-743 each act as for beta-ketoacyl synthase activity in the active site. The tract at residues 931–1230 is malonyl-CoA:ACP transacylase (MAT) domain; it reads FTGQGAYYHG…PSASAMSSCR (300 aa). The tract at residues 1322–1458 is N-terminal hotdog fold; that stretch reads HQITAETVEA…AMIRFEDPVA (137 aa). One can recognise a PKS/mFAS DH domain in the interval 1322–1632; it reads HQITAETVEA…FRRVPRLLMD (311 aa). The active-site Proton acceptor; for dehydratase activity is His-1354. The product template (PT) domain stretch occupies residues 1390–1628; that stretch reads HMNLTDVEVL…GMIRFRRVPR (239 aa). The C-terminal hotdog fold stretch occupies residues 1486–1632; the sequence is ASRLSKPLAY…FRRVPRLLMD (147 aa). Asp-1543 (proton donor; for dehydratase activity) is an active-site residue. The interval 1685 to 1719 is disordered; the sequence is MASKAPEPAPLLATSSESSTPKESPIVTPAESERA. Low complexity predominate over residues 1698–1709; it reads TSSESSTPKESP. Residues 1721 to 1798 enclose the Carrier domain; the sequence is PVDNNMISQC…EMTAWIEEYC (78 aa). Position 1758 is an O-(pantetheine 4'-phosphoryl)serine (Ser-1758).

Pantetheine 4'-phosphate is required as a cofactor.

The protein operates within secondary metabolite biosynthesis. Functionally, non-reducing polyketide synthase; part of the gene cluster that mediates the biosynthesis of neosartoricin B, a prenylated anthracenone that probably exhibits T-cell antiproliferative activity, suggestive of a physiological role as an immunosuppressive agent. The non-reducing polyketide synthase nscA probably synthesizes and cyclizes the decaketide backbone. The hydrolase nscB then mediates the product release through hydrolysis followed by spontaneous decarboxylation. The prenyltransferase nscD catalyzes the addition of the dimethylallyl group to the aromatic C5. The FAD-dependent monooxygenase nscC is then responsible for the stereospecific hydroxylation at C2. Neosartoricin B can be converted into two additional compounds neosartoricins C and D. Neosartoricin C is a spirocyclic compound that is cyclized through the attack of C3 hydroxyl on C14, followed by dehydration. On the other hand, neosartoricin D is a further cyclized compound in which attack of C2 on C14 in neosartoricin C results in the formation of the acetal-containing dioxabicyclo-octanone ring. Both of these compounds are novel and possibly represent related metabolites of the gene cluster. The sequence is that of Non-reducing polyketide synthase nscA from Arthroderma benhamiae (strain ATCC MYA-4681 / CBS 112371) (Trichophyton mentagrophytes).